The following is a 184-amino-acid chain: 3-hydroxydecanoyl-[acyl-carrier-protein] dehydratase (184 aa).

Histidine 77 is an active-site residue.

The protein belongs to the thioester dehydratase family. FabA subfamily. In terms of assembly, homodimer.

Its subcellular location is the cytoplasm. The enzyme catalyses a (3R)-hydroxyacyl-[ACP] = a (2E)-enoyl-[ACP] + H2O. It catalyses the reaction (3R)-hydroxydecanoyl-[ACP] = (2E)-decenoyl-[ACP] + H2O. It carries out the reaction (2E)-decenoyl-[ACP] = (3Z)-decenoyl-[ACP]. It functions in the pathway lipid metabolism; fatty acid biosynthesis. Necessary for the introduction of cis unsaturation into fatty acids. Catalyzes the dehydration of (3R)-3-hydroxydecanoyl-ACP to E-(2)-decenoyl-ACP and then its isomerization to Z-(3)-decenoyl-ACP. Can catalyze the dehydratase reaction for beta-hydroxyacyl-ACPs with saturated chain lengths up to 16:0, being most active on intermediate chain length. In Hyphomonas neptunium (strain ATCC 15444), this protein is 3-hydroxydecanoyl-[acyl-carrier-protein] dehydratase.